The sequence spans 151 residues: Putative pre-16S rRNA nuclease (151 aa).

The protein belongs to the YqgF nuclease family.

The protein localises to the cytoplasm. Could be a nuclease involved in processing of the 5'-end of pre-16S rRNA. The polypeptide is Putative pre-16S rRNA nuclease (Methylococcus capsulatus (strain ATCC 33009 / NCIMB 11132 / Bath)).